Consider the following 872-residue polypeptide: Leucine--tRNA ligase (872 aa).

A 'HIGH' region motif is present at residues 42–52; the sequence is PYPSGNLHMGH. The 'KMSKS' region signature appears at 631 to 635; that stretch reads KMSKS. Lys-634 serves as a coordination point for ATP.

Belongs to the class-I aminoacyl-tRNA synthetase family.

It is found in the cytoplasm. It carries out the reaction tRNA(Leu) + L-leucine + ATP = L-leucyl-tRNA(Leu) + AMP + diphosphate. The protein is Leucine--tRNA ligase of Blochmanniella pennsylvanica (strain BPEN).